The chain runs to 60 residues: UPF0434 protein mma_2578 (60 aa).

Belongs to the UPF0434 family.

The protein is UPF0434 protein mma_2578 of Janthinobacterium sp. (strain Marseille) (Minibacterium massiliensis).